The chain runs to 49 residues: Delta-actitoxin-Axm1h (49 aa).

3 cysteine pairs are disulfide-bonded: cysteine 4-cysteine 46, cysteine 6-cysteine 36, and cysteine 29-cysteine 47.

The protein belongs to the sea anemone sodium channel inhibitory toxin family. Type I subfamily.

The protein localises to the secreted. It is found in the nematocyst. In terms of biological role, binds specifically to voltage-gated sodium channels (Nav) (site 3), thereby delaying their inactivation during signal transduction. Thus it may strongly stimulate mammalian cardiac muscle contraction. This chain is Delta-actitoxin-Axm1h, found in Anthopleura xanthogrammica (Giant green sea anemone).